The following is a 276-amino-acid chain: Putative pyridoxine kinase (276 aa).

Asparagine 139 serves as a coordination point for ATP. Glutamate 142 contributes to the Mg(2+) binding site. Residues 176–180, aspartate 188, glycine 213, and lysine 238 contribute to the ATP site; that span reads KGGKA.

The protein belongs to the ThiD family.

It catalyses the reaction pyridoxal + ATP = pyridoxal 5'-phosphate + ADP + H(+). Its function is as follows. Phosphorylates B6 vitamers; functions in a salvage pathway. Uses pyridoxal, pyridoxine, and pyridoxamine as substrates. This Staphylococcus aureus (strain COL) protein is Putative pyridoxine kinase (pdxK).